Consider the following 327-residue polypeptide: GMP reductase (327 aa).

Cys176 functions as the Thioimidate intermediate in the catalytic mechanism. Residue 205 to 228 (IIADGGIRTHGDIAKSIRFGASMV) participates in NADP(+) binding.

It belongs to the IMPDH/GMPR family. GuaC type 2 subfamily.

The catalysed reaction is IMP + NH4(+) + NADP(+) = GMP + NADPH + 2 H(+). Functionally, catalyzes the irreversible NADPH-dependent deamination of GMP to IMP. It functions in the conversion of nucleobase, nucleoside and nucleotide derivatives of G to A nucleotides, and in maintaining the intracellular balance of A and G nucleotides. This Streptococcus pyogenes serotype M5 (strain Manfredo) protein is GMP reductase.